Here is a 500-residue protein sequence, read N- to C-terminus: MYTFIYFKNPKHFNLSQPSRCTAQPFISTRNRPLSCPIPTVQPIYVTHGIILPILKGTLISQRGVNIVPFVSKRDSSYYTDKDKVVSITYEEIGLFPRSFSRVLDRFLKQLFSDVDNLVIQEYRFYRYLFLTTIKTIFILFFVPFLVNFAAKNYIVKPITEYFWNTSHPEIFLNSYEQKRAFVELAKFEEKIYFETLVESHSHHQTHRDSKPLRENGIYFPDGEFLDNANLLSTPRSINSNTFLKQNIDISLREEKPLTLVQGVNLLEEKKELNIPLAQENIAYNNQSIPQTSFGQGNFSSLFTGDREGEETAKQNLLSQRVIGANLRQIYLPSAEGEMLPSIRGSLDSIKNKDISKIYQEKTIELATYYNNHSIEAITNFFADLLSLFTLLYLLITLEIQINITKSFLLEVFFGLDDSKKSLLILLITDLLVGYHSSNLWELFFEFIFNHYGIPESQTGIFLLVATLPVLLDVLFKYLIFRHLNRSSPATVATYQAIIE.

The chain crosses the membrane as a helical span at residues 129–149 (LFLTTIKTIFILFFVPFLVNF). The interval 204–354 (HQTHRDSKPL…GSLDSIKNKD (151 aa)) is insert. The next 3 membrane-spanning stretches (helical) occupy residues 378-398 (ITNF…LITL), 425-445 (ILLI…ELFF), and 461-481 (IFLL…YLIF).

This sequence belongs to the CemA family.

It localises to the plastid. The protein localises to the chloroplast inner membrane. It catalyses the reaction K(+)(in) + H(+)(out) = K(+)(out) + H(+)(in). Contributes to K(+)/H(+) antiport activity by supporting proton efflux to control proton extrusion and homeostasis in chloroplasts in a light-dependent manner to modulate photosynthesis. Prevents excessive induction of non-photochemical quenching (NPQ) under continuous-light conditions. Indirectly promotes efficient inorganic carbon uptake into chloroplasts. The protein is Potassium/proton antiporter CemA of Chlamydomonas reinhardtii (Chlamydomonas smithii).